A 365-amino-acid polypeptide reads, in one-letter code: Protein Tob1 (365 aa).

The Bipartite nuclear localization signal signature appears at 22–39; it reads RRRVNIFGEELERLLKQK. Residues 82–92 form an important for nuclear localization region; the sequence is VRGNLPQDLSV. A compositionally biased stretch (low complexity) spans 144–160; that stretch reads DPASSVSSSPSPPFGHS. A disordered region spans residues 144-171; that stretch reads DPASSVSSSPSPPFGHSAAVSPTFMPRS. The interval 161–220 is required for interaction with CPEB3; sequence AAVSPTFMPRSTQPLTFTTATFAATKFGSTKMKNSGRSSKVARTSPISLGLNVNVNDLLK. Thr204 bears the Phosphothreonine mark. Residues 228 to 236 carry the Nuclear export signal motif; it reads MHSLYGLGL. The tract at residues 233 to 287 is disordered; it reads GLGLGSQQQPQPQPQQPPSQPPPPPPPPQQQQQHQQQQQQQQQQQQQPQQQTSAL. Over residues 243–261 the composition is skewed to pro residues; the sequence is QPQPQQPPSQPPPPPPPPQ. The segment covering 262–283 has biased composition (low complexity); that stretch reads QQQQHQQQQQQQQQQQQQPQQQ.

The protein belongs to the BTG family. Interacts with ERBB2. Interacts with CNOT7. Interacts with CPEB3 (via C-terminal RNA-binding region); recruits CNOT7 to CPEB3 to form a ternary complex required for mRNA deadenylation and decay. Interacts with CNOT8. Interacts with CPEB4. Phosphorylated on Ser and Thr residues.

The protein resides in the cytoplasm. The protein localises to the nucleus. Anti-proliferative protein; the function is mediated by association with deadenylase subunits of the CCR4-NOT complex. Mediates CPEB3-accelerated mRNA deadenylation by binding to CPEB3 and recruiting CNOT7 which leads to target mRNA deadenylation and decay. The sequence is that of Protein Tob1 (Tob1) from Rattus norvegicus (Rat).